A 417-amino-acid polypeptide reads, in one-letter code: MLKREMNIADYDAELWQAMEQEKVRQEEHIELIASENYTSPRVMQAQGSQLTNKYAEGYPGKRYYGGCEYVDIVEQLAIDRAKELFGADYANVQPHSGSQANFAVYTALLQPGDTVLGMNLAQGGHLTHGSPVNFSGKLYNIIPYGIDASGKIDYDDMAKQAQEHKPKMIIGGFSAYSGVVDWARMREIADSIGAYLFVDMAHVAGLIAAGVYPNPVPHAHVVTTTTHKTLAGPRGGLILAKGGDEDLYKKLNSAVFPSAQGGPLMHVIAAKAVALKEAMEPEFKVYQQQVAKNAKAMVEVFLNRGYKVVSGGTENHLFLLDLVDKNLTGKEADAALGRANITVNKNSVPNDPKSPFVTSGIRIGSPAVTRRGFKEAEVKELAGWMCDVLDNINDEATIERVKTKVLDICARFPVYA.

Residues L121 and 125 to 127 (GHL) contribute to the (6S)-5,6,7,8-tetrahydrofolate site. At K229 the chain carries N6-(pyridoxal phosphate)lysine. 355 to 357 (SPF) serves as a coordination point for (6S)-5,6,7,8-tetrahydrofolate.

The protein belongs to the SHMT family. In terms of assembly, homodimer. Requires pyridoxal 5'-phosphate as cofactor.

Its subcellular location is the cytoplasm. It carries out the reaction (6R)-5,10-methylene-5,6,7,8-tetrahydrofolate + glycine + H2O = (6S)-5,6,7,8-tetrahydrofolate + L-serine. The protein operates within one-carbon metabolism; tetrahydrofolate interconversion. Its pathway is amino-acid biosynthesis; glycine biosynthesis; glycine from L-serine: step 1/1. In terms of biological role, catalyzes the reversible interconversion of serine and glycine with tetrahydrofolate (THF) serving as the one-carbon carrier. This reaction serves as the major source of one-carbon groups required for the biosynthesis of purines, thymidylate, methionine, and other important biomolecules. Also exhibits THF-independent aldolase activity toward beta-hydroxyamino acids, producing glycine and aldehydes, via a retro-aldol mechanism. This is Serine hydroxymethyltransferase from Salmonella arizonae (strain ATCC BAA-731 / CDC346-86 / RSK2980).